Consider the following 101-residue polypeptide: Small ribosomal subunit protein uS14A (101 aa).

The interval 47 to 66 (ALASLPRDSNPNRVTNRCAL) is disordered.

The protein belongs to the universal ribosomal protein uS14 family. Part of the 30S ribosomal subunit. Contacts proteins S3 and S10.

Its function is as follows. Binds 16S rRNA, required for the assembly of 30S particles and may also be responsible for determining the conformation of the 16S rRNA at the A site. The chain is Small ribosomal subunit protein uS14A from Myxococcus xanthus (strain DK1622).